A 129-amino-acid polypeptide reads, in one-letter code: M-zodatoxin-Lt8g (129 aa).

The first 20 residues, 1–20 (MKYFVVALALVAAFACIAES), serve as a signal peptide directing secretion. Residues 21-60 (KPAESEHELAEVEEENELADLEDAVWLEHLADLSDLEEAR) constitute a propeptide that is removed on maturation. The Processing quadruplet motif motif lies at 57-60 (EEAR).

Post-translationally, cleavage of the propeptide depends on the processing quadruplet motif (XXXR, with at least one of X being E). As to expression, expressed by the venom gland.

The protein resides in the secreted. Its function is as follows. Insecticidal, cytolytic and antimicrobial peptide. Has insecticidal activity against the flesh fly S.carnaria. Has antibacterial activity against the Gram-negative bacteria E.coli. Forms voltage-dependent, ion-permeable channels in membranes. At high concentration causes cell membrane lysis. The protein is M-zodatoxin-Lt8g (cit 1-8) of Lachesana tarabaevi (Spider).